A 506-amino-acid polypeptide reads, in one-letter code: Dipeptide and tripeptide permease A (506 aa).

Over 1-36 the chain is Cytoplasmic; the sequence is MSTANNNSESTESVSMNAFKQPKAFYLIFSIELWER. The helical transmembrane segment at 37 to 57 threads the bilayer; sequence FGYYGLQGIMAVYLVKMLGMS. The Periplasmic portion of the chain corresponds to 58-61; sequence ETDS. The chain crosses the membrane as a helical span at residues 62–82; it reads ITLFSSFSALVYGFVAIGGWL. Over 83 to 91 the chain is Cytoplasmic; the sequence is GDKVLGTKR. 2 helical membrane-spanning segments follow: residues 92-112 and 113-133; these read VIVL…YSGH and SVAW…LFKA. Over 134-155 the chain is Cytoplasmic; sequence NPSALLSTCYAKDDPRLDGAFT. The chain crosses the membrane as a helical span at residues 156–176; that stretch reads MYYMAVNIGSFFSMLATPVLA. The Periplasmic segment spans residues 177–180; sequence ANYG. The helical transmembrane segment at 181 to 201 threads the bilayer; that stretch reads WSVAFSLSVVGMILTLVNFMF. The Cytoplasmic portion of the chain corresponds to 202-222; the sequence is CRKWVSTQGSQPDFQPINLKK. Residues 223-243 traverse the membrane as a helical segment; it reads LVITLAGIVVLVALSTWLLHN. Residues 244 to 248 are Periplasmic-facing; sequence QGVAR. The chain crosses the membrane as a helical span at residues 249 to 269; sequence WILTIISLAVVAIFIKEMLAV. Residues 270 to 276 are Cytoplasmic-facing; it reads SGAERRK. Residues 277–297 form a helical membrane-spanning segment; sequence MIVALLLMLEAVVFFVLYNQM. The Periplasmic segment spans residues 298–322; it reads PTSLNFFAIRNVEHSILGFAFEPEQ. A helical membrane pass occupies residues 323–343; it reads YQALNPFWIMVASPLLAAVYN. The Cytoplasmic portion of the chain corresponds to 344–354; the sequence is KMGDQLPMAHK. A helical membrane pass occupies residues 355–375; it reads FAIGMVLCSGAFLVLPWGASM. At 376–385 the chain is on the periplasmic side; the sequence is ANEQGIVSVN. A helical transmembrane segment spans residues 386–406; sequence WLILCYGLQSIGELMISGLGL. Over 407–416 the chain is Cytoplasmic; sequence AMVAQLVPQR. The helical transmembrane segment at 417 to 437 threads the bilayer; the sequence is LMGFIMGAWFLTSAGAAIIAG. Residues 438-461 lie on the Periplasmic side of the membrane; it reads YVANMMAVPENVVDPHVSLEVYSN. The chain crosses the membrane as a helical span at residues 462 to 482; the sequence is VFMQIGIVTGIIAVLMMLTAP. The Cytoplasmic segment spans residues 483–506; that stretch reads KLTRMTQDVATDVPADAATTTASA.

This sequence belongs to the major facilitator superfamily. Proton-dependent oligopeptide transporter (POT/PTR) (TC 2.A.17) family. DtpA subfamily.

Its subcellular location is the cell inner membrane. Proton-dependent permease that transports di- and tripeptides. This is Dipeptide and tripeptide permease A from Pectobacterium carotovorum subsp. carotovorum (strain PC1).